The primary structure comprises 190 residues: Somatotropin (190 aa).

An N-terminal signal peptide occupies residues 1–17; that stretch reads MNRVILLLSVMCVGVSS. Cystine bridges form between C69/C163 and C180/C188.

This sequence belongs to the somatotropin/prolactin family.

The protein localises to the secreted. Growth hormone plays an important role in growth control and is involved in the regulation of several anabolic processes. Implicated as an osmoregulatory substance important for seawater adaptation. The polypeptide is Somatotropin (gh) (Paralichthys olivaceus (Bastard halibut)).